Here is a 722-residue protein sequence, read N- to C-terminus: Ras and EF-hand domain-containing protein (722 aa).

EF-hand domains lie at 5–39 (DELS…ELKV) and 39–74 (VSPS…ARGL). Over residues 75-84 (HMPEGKKDVE) the composition is skewed to basic and acidic residues. The interval 75 to 109 (HMPEGKKDVEQGEPPKSPSTPDKEEKPEETSSPAW) is disordered. The stretch at 156-335 (REIRLQSTEM…ANRKLHDSND (180 aa)) forms a coiled coil. A compositionally biased stretch (polar residues) spans 355 to 374 (INTSPGSTISRNSPKLTRCT). Disordered regions lie at residues 355 to 384 (INTS…PRSS) and 439 to 491 (FHRS…SGAS). A compositionally biased stretch (low complexity) spans 480–491 (SNPVSRSSSGAS). GTP contacts are provided by residues 532–537 (AVGKSS), 635–638 (NKAD), and 672–673 (AK).

The protein belongs to the small GTPase superfamily. Rab family. Homodimer.

The protein localises to the cytoplasm. The protein resides in the perinuclear region. Its function is as follows. Binds predominantly GDP, and also GTP. The sequence is that of Ras and EF-hand domain-containing protein (rasef) from Xenopus tropicalis (Western clawed frog).